A 423-amino-acid polypeptide reads, in one-letter code: L-cysteine:1D-myo-inositol 2-amino-2-deoxy-alpha-D-glucopyranoside ligase (423 aa).

Zn(2+) is bound at residue C43. L-cysteinyl-5'-AMP is bound by residues 43-46 (CGIT), T58, and 81-83 (NVT). Positions 45–55 (ITPYDATHMGH) match the 'HIGH' region motif. Positions 199–204 (ERGGDP) match the 'ERGGDP' region motif. W240 is an L-cysteinyl-5'-AMP binding site. C244 is a Zn(2+) binding site. 262 to 264 (GSD) serves as a coordination point for L-cysteinyl-5'-AMP. H269 is a Zn(2+) binding site. V295 provides a ligand contact to L-cysteinyl-5'-AMP. The 'KMSKS' region motif lies at 301–305 (KMSKS).

Belongs to the class-I aminoacyl-tRNA synthetase family. MshC subfamily. Monomer. It depends on Zn(2+) as a cofactor.

The catalysed reaction is 1D-myo-inositol 2-amino-2-deoxy-alpha-D-glucopyranoside + L-cysteine + ATP = 1D-myo-inositol 2-(L-cysteinylamino)-2-deoxy-alpha-D-glucopyranoside + AMP + diphosphate + H(+). Catalyzes the ATP-dependent condensation of GlcN-Ins and L-cysteine to form L-Cys-GlcN-Ins. The polypeptide is L-cysteine:1D-myo-inositol 2-amino-2-deoxy-alpha-D-glucopyranoside ligase (Renibacterium salmoninarum (strain ATCC 33209 / DSM 20767 / JCM 11484 / NBRC 15589 / NCIMB 2235)).